The following is a 470-amino-acid chain: Neuraminidase (470 aa).

Topologically, residues 1–6 (MNPNQK) are intravirion. A helical transmembrane segment spans residues 7–27 (IITIGSICMAIGIISLILQMG). Positions 11–33 (GSICMAIGIISLILQMGNIISIW) are involved in apical transport and lipid raft association. Residues 28-470 (NIISIWVSHS…GAELPFTIDK (443 aa)) lie on the Virion surface side of the membrane. Residues 36–90 (HSIQTGSQNHTGICNQRIITYENSTWVNQTYVNINNTNVVAGKDTTSVTLAGNSS) form a hypervariable stalk region region. 5 N-linked (GlcNAc...) asparagine; by host glycosylation sites follow: asparagine 44, asparagine 58, asparagine 63, asparagine 70, and asparagine 88. The head of neuraminidase stretch occupies residues 91–470 (LCPIRGWAIY…GAELPFTIDK (380 aa)). 8 disulfide bridges follow: cysteine 92-cysteine 417, cysteine 124-cysteine 129, cysteine 184-cysteine 231, cysteine 233-cysteine 238, cysteine 279-cysteine 292, cysteine 281-cysteine 290, cysteine 318-cysteine 335, and cysteine 421-cysteine 447. Arginine 118 lines the substrate pocket. Asparagine 146 carries N-linked (GlcNAc...) asparagine; by host glycosylation. Catalysis depends on aspartate 151, which acts as the Proton donor/acceptor. Arginine 152 provides a ligand contact to substrate. Asparagine 235 is a glycosylation site (N-linked (GlcNAc...) asparagine; by host). 277–278 (EE) contributes to the substrate binding site. Arginine 293 provides a ligand contact to substrate. Residues aspartate 294, glycine 298, and aspartate 324 each contribute to the Ca(2+) site. The N-linked (GlcNAc...) asparagine; by host glycan is linked to asparagine 365. Residue arginine 368 participates in substrate binding. Tyrosine 402 functions as the Nucleophile in the catalytic mechanism. N-linked (GlcNAc...) asparagine; by host glycosylation is present at asparagine 455.

This sequence belongs to the glycosyl hydrolase 34 family. Homotetramer. Ca(2+) is required as a cofactor. Post-translationally, N-glycosylated.

The protein localises to the virion membrane. The protein resides in the host apical cell membrane. The enzyme catalyses Hydrolysis of alpha-(2-&gt;3)-, alpha-(2-&gt;6)-, alpha-(2-&gt;8)- glycosidic linkages of terminal sialic acid residues in oligosaccharides, glycoproteins, glycolipids, colominic acid and synthetic substrates.. Inhibited by the neuraminidase inhibitors zanamivir (Relenza) and oseltamivir (Tamiflu). These drugs interfere with the release of progeny virus from infected cells and are effective against all influenza strains. Resistance to neuraminidase inhibitors is quite rare. Functionally, catalyzes the removal of terminal sialic acid residues from viral and cellular glycoconjugates. Cleaves off the terminal sialic acids on the glycosylated HA during virus budding to facilitate virus release. Additionally helps virus spread through the circulation by further removing sialic acids from the cell surface. These cleavages prevent self-aggregation and ensure the efficient spread of the progeny virus from cell to cell. Otherwise, infection would be limited to one round of replication. Described as a receptor-destroying enzyme because it cleaves a terminal sialic acid from the cellular receptors. May facilitate viral invasion of the upper airways by cleaving the sialic acid moieties on the mucin of the airway epithelial cells. Likely to plays a role in the budding process through its association with lipid rafts during intracellular transport. May additionally display a raft-association independent effect on budding. Plays a role in the determination of host range restriction on replication and virulence. Sialidase activity in late endosome/lysosome traffic seems to enhance virus replication. In Aves (Human), this protein is Neuraminidase.